A 126-amino-acid polypeptide reads, in one-letter code: Large ribosomal subunit protein eL8 (126 aa).

It belongs to the eukaryotic ribosomal protein eL8 family. As to quaternary structure, part of the 50S ribosomal subunit. Probably part of the RNase P complex.

The protein resides in the cytoplasm. In terms of biological role, multifunctional RNA-binding protein that recognizes the K-turn motif in ribosomal RNA, the RNA component of RNase P, box H/ACA, box C/D and box C'/D' sRNAs. The polypeptide is Large ribosomal subunit protein eL8 (Sulfolobus acidocaldarius (strain ATCC 33909 / DSM 639 / JCM 8929 / NBRC 15157 / NCIMB 11770)).